The sequence spans 809 residues: Sodium/hydrogen exchanger 2 (809 aa).

7 helical membrane passes run 107–127, 138–158, 169–189, 209–229, 237–257, 278–298, and 308–328; these read IVPE…IIFG, TDVF…YFMP, IFWY…VSLF, LFGS…FENI, ILVF…YNLF, FFVV…IAAF, and VIEP…AEMF. Asn350 carries an N-linked (GlcNAc...) asparagine glycan. 4 helical membrane-spanning segments follow: residues 361–381, 392–412, 430–450, and 459–479; these read YFMK…MGVS, AFVC…VFVL, FIIA…FLLP, and LFIT…GITI. Basic and acidic residues-rich tracts occupy residues 648–660 and 793–809; these read IRKD…ERRA and RASE…SDKP. Disordered stretches follow at residues 648 to 700 and 734 to 809; these read IRKD…EADA and EVDA…SDKP.

Belongs to the monovalent cation:proton antiporter 1 (CPA1) transporter (TC 2.A.36) family. In terms of assembly, interacts with CHP1 and CHP2. As to expression, high levels in intestine and kidney. Strongly expressed in gastric epithelial cells, with particularly high expression levels in mucous cells.

The protein localises to the apical cell membrane. The enzyme catalyses Na(+)(in) + H(+)(out) = Na(+)(out) + H(+)(in). Plasma membrane Na(+)/H(+) antiporter. Mediates the electroneutral exchange of intracellular H(+) ions for extracellular Na(+). Major apical Na(+)/H(+) exchanger in the base of the colonic crypt. Controls in the colonic crypt intracellular pH (pHi) to direct colonic epithelial cell differentiation into the absorptive enterocyte lineage at the expense of the secretory lineage. This Oryctolagus cuniculus (Rabbit) protein is Sodium/hydrogen exchanger 2 (SLC9A2).